A 241-amino-acid polypeptide reads, in one-letter code: DnaJ homolog subfamily B member 6 (241 aa).

The interval 2–146 is interaction with HSP70; sequence VDYYEVLGVQ…TGSFFSAFSG (145 aa). The J domain maps to 3–69; sequence DYYEVLGVQR…KKRDIYDKYG (67 aa). The interval 119–241 is interaction with KRT18; the sequence is FEDFFGNRRG…KEQLLRLDNK (123 aa). At arginine 135 the chain carries Omega-N-methylarginine.

Homooligomer. Interacts with BAG3, HSPB8 and STUB1. Interacts with ALKBH1. Interacts with HSP70, KRT18 and PTTG.

It is found in the cytoplasm. The protein resides in the perinuclear region. Its subcellular location is the nucleus. The protein localises to the myofibril. It localises to the sarcomere. It is found in the z line. Functionally, has a stimulatory effect on the ATPase activity of HSP70 in a dose-dependent and time-dependent manner and hence acts as a co-chaperone of HSP70. Plays an indispensable role in the organization of KRT8/KRT18 filaments. Acts as an endogenous molecular chaperone for neuronal proteins including huntingtin. Suppresses aggregation and toxicity of polyglutamine-containing, aggregation-prone proteins. Also reduces cellular toxicity and caspase-3 activity. The sequence is that of DnaJ homolog subfamily B member 6 from Macaca fascicularis (Crab-eating macaque).